The sequence spans 505 residues: 2,3-bisphosphoglycerate-independent phosphoglycerate mutase (505 aa).

Mn(2+)-binding residues include D11 and S61. S61 acts as the Phosphoserine intermediate in catalysis. Residues H122, 152-153 (RD), R183, R189, 259-262 (RTDR), and K332 contribute to the substrate site. 5 residues coordinate Mn(2+): D399, H403, D440, H441, and H458.

This sequence belongs to the BPG-independent phosphoglycerate mutase family. In terms of assembly, monomer. The cofactor is Mn(2+).

The enzyme catalyses (2R)-2-phosphoglycerate = (2R)-3-phosphoglycerate. The protein operates within carbohydrate degradation; glycolysis; pyruvate from D-glyceraldehyde 3-phosphate: step 3/5. In terms of biological role, catalyzes the interconversion of 2-phosphoglycerate and 3-phosphoglycerate. This is 2,3-bisphosphoglycerate-independent phosphoglycerate mutase from Flavobacterium johnsoniae (strain ATCC 17061 / DSM 2064 / JCM 8514 / BCRC 14874 / CCUG 350202 / NBRC 14942 / NCIMB 11054 / UW101) (Cytophaga johnsonae).